The sequence spans 338 residues: Large ribosomal subunit protein uL10 (338 aa).

The interval 297-338 (PSAQQTQTQQSTAEEKKEEKKEEEKKGPSEEEIGSGLASLFG) is disordered. Residues 298 to 308 (SAQQTQTQQST) show a composition bias toward low complexity. A compositionally biased stretch (basic and acidic residues) spans 309–325 (AEEKKEEKKEEEKKGPS).

The protein belongs to the universal ribosomal protein uL10 family. Part of the 50S ribosomal subunit. Forms part of the ribosomal stalk which helps the ribosome interact with GTP-bound translation factors. Forms a heptameric L10(L12)2(L12)2(L12)2 complex, where L10 forms an elongated spine to which the L12 dimers bind in a sequential fashion.

Forms part of the ribosomal stalk, playing a central role in the interaction of the ribosome with GTP-bound translation factors. The protein is Large ribosomal subunit protein uL10 of Saccharolobus islandicus (strain M.14.25 / Kamchatka #1) (Sulfolobus islandicus).